The chain runs to 134 residues: Arsenate reductase (134 aa).

Catalysis depends on nucleophile residues cysteine 11, cysteine 83, and cysteine 90. Intrachain disulfides connect cysteine 11/cysteine 83 and cysteine 83/cysteine 90.

This sequence belongs to the low molecular weight phosphotyrosine protein phosphatase family. Thioredoxin-coupled ArsC subfamily.

It localises to the cytoplasm. The catalysed reaction is arsenate + [thioredoxin]-dithiol + H(+) = arsenite + [thioredoxin]-disulfide + H2O. Its function is as follows. Catalyzes the reduction of arsenate [As(V)] to arsenite [As(III)]. The sequence is that of Arsenate reductase from Brevibacillus brevis (strain 47 / JCM 6285 / NBRC 100599).